The sequence spans 937 residues: ABC transporter A family member 4 (937 aa).

A run of 7 helical transmembrane segments spans residues 34 to 54 (LIVI…LFDT), 340 to 360 (IASV…FPVI), 394 to 414 (FLAI…AIGL), 423 to 443 (SIQF…AFLV), 455 to 475 (VAAY…FQFM), 478 to 498 (GLSF…FSLY), and 528 to 548 (AMDE…IAAY). The region spanning 618 to 852 (DKLKKVYPGR…YGGSYVLTMT (235 aa)) is the ABC transporter domain. An ATP-binding site is contributed by 653-660 (GPNGAGKT).

The protein belongs to the ABC transporter superfamily. ABCA family. CPR flippase (TC 3.A.1.211) subfamily.

Its subcellular location is the membrane. In Arabidopsis thaliana (Mouse-ear cress), this protein is ABC transporter A family member 4 (ABCA4).